Reading from the N-terminus, the 247-residue chain is Putative ankyrin repeat protein RBE_1110 (247 aa).

ANK repeat units lie at residues 105 to 135 (QNKDVFYQAVMSNKKKLVKKILSYNPKCIDY) and 139 to 171 (EGHNVLHIALKNKAKADAEMIEILLQCKPKLIT).

The sequence is that of Putative ankyrin repeat protein RBE_1110 from Rickettsia bellii (strain RML369-C).